The chain runs to 498 residues: Lysine--tRNA ligase (498 aa).

Mg(2+)-binding residues include Glu401 and Glu408.

It belongs to the class-II aminoacyl-tRNA synthetase family. As to quaternary structure, homodimer. Mg(2+) serves as cofactor.

The protein localises to the cytoplasm. It carries out the reaction tRNA(Lys) + L-lysine + ATP = L-lysyl-tRNA(Lys) + AMP + diphosphate. The sequence is that of Lysine--tRNA ligase from Dehalococcoides mccartyi (strain ATCC BAA-2266 / KCTC 15142 / 195) (Dehalococcoides ethenogenes (strain 195)).